Consider the following 402-residue polypeptide: Non-homologous end joining protein Ku (402 aa).

One can recognise a Ku domain in the interval 12–185 (ISFGLVTIPV…VAALTGIAQP (174 aa)). The tract at residues 261–402 (QRAAGGATGG…GPDETAPGGP (142 aa)) is disordered. 2 stretches are compositionally biased toward low complexity: residues 299–308 (GDPAASVPGV) and 332–343 (VPGVPATAVPGT). A compositionally biased stretch (pro residues) spans 344-358 (PGAPVPTAPGVPSAP). Low complexity predominate over residues 359 to 376 (APGTSPTSVPGVQTAPNG).

It belongs to the prokaryotic Ku family. Homodimer. Interacts with LigD.

Its function is as follows. With LigD forms a non-homologous end joining (NHEJ) DNA repair enzyme, which repairs dsDNA breaks with reduced fidelity. Binds linear dsDNA with 5'- and 3'- overhangs but not closed circular dsDNA nor ssDNA. Recruits and stimulates the ligase activity of LigD. The sequence is that of Non-homologous end joining protein Ku from Symbiobacterium thermophilum (strain DSM 24528 / JCM 14929 / IAM 14863 / T).